The following is an 891-amino-acid chain: Alanine--tRNA ligase (891 aa).

Residues His569, His573, Cys671, and His675 each coordinate Zn(2+).

The protein belongs to the class-II aminoacyl-tRNA synthetase family. Homotetramer. The cofactor is Zn(2+).

The protein resides in the cytoplasm. The enzyme catalyses tRNA(Ala) + L-alanine + ATP = L-alanyl-tRNA(Ala) + AMP + diphosphate. In terms of biological role, catalyzes the attachment of alanine to tRNA(Ala) in a two-step reaction: alanine is first activated by ATP to form Ala-AMP and then transferred to the acceptor end of tRNA(Ala). Also edits incorrectly charged Ser-tRNA(Ala) and Gly-tRNA(Ala) via its editing domain. This chain is Alanine--tRNA ligase, found in Blochmanniella floridana.